The following is a 473-amino-acid chain: MDYFPIFCQLQHKACLLVGGGEIAERKARLLLDAGALVTVNACEFAPQFHHWADQGQLSLISGEFVPELLADKWLVIAATDQLSVNALVYQSANQQRIFCNVVDDPKRTSFIMPSIIDRSPIMIAVSSGGKAPVLARLLREKLEALLPQHLGQLAQLAGNLRQRVKQHFTVMTERRRFWEKLLTHDRLAQSLANNDHVQADQHVEQLFSAPLTDRGEVVLVGAGPGDAGLLTLKGLQQIQQADVVVYDRLVSDEVMNLVRRDAERIFVGKQSGHHCVPQEQINQILLQQAQSGKRVVRLKGGDPFIFGRGGEELEELAGYGIPFSVVPGITAASGCSAYSGIPLTHRDHAQSVRLVTGHAKKEGQLDWANLAAEKQTLVFYMGLSQAGEIQQQLIQHGMPATTQVALVENGTSRHQRVVSGELSQLALLSQQVSSPSLIIVGSVVSLREKLNWFSSRHHDDQPKVTECVAHVG.

The precorrin-2 dehydrogenase /sirohydrochlorin ferrochelatase stretch occupies residues 1–204 (MDYFPIFCQL…NDHVQADQHV (204 aa)). NAD(+) is bound by residues 22-23 (EI) and 43-44 (CE). Residue Ser-128 is modified to Phosphoserine. The uroporphyrinogen-III C-methyltransferase stretch occupies residues 216–473 (GEVVLVGAGP…KVTECVAHVG (258 aa)). Pro-225 is a binding site for S-adenosyl-L-methionine. The active-site Proton acceptor is the Asp-248. Lys-270 acts as the Proton donor in catalysis. S-adenosyl-L-methionine contacts are provided by residues 301 to 303 (GGD), Ile-306, 331 to 332 (TA), Met-382, and Gly-411.

It in the N-terminal section; belongs to the precorrin-2 dehydrogenase / sirohydrochlorin ferrochelatase family. In the C-terminal section; belongs to the precorrin methyltransferase family.

It catalyses the reaction uroporphyrinogen III + 2 S-adenosyl-L-methionine = precorrin-2 + 2 S-adenosyl-L-homocysteine + H(+). It carries out the reaction precorrin-2 + NAD(+) = sirohydrochlorin + NADH + 2 H(+). The catalysed reaction is siroheme + 2 H(+) = sirohydrochlorin + Fe(2+). Its pathway is cofactor biosynthesis; adenosylcobalamin biosynthesis; precorrin-2 from uroporphyrinogen III: step 1/1. The protein operates within cofactor biosynthesis; adenosylcobalamin biosynthesis; sirohydrochlorin from precorrin-2: step 1/1. It participates in porphyrin-containing compound metabolism; siroheme biosynthesis; precorrin-2 from uroporphyrinogen III: step 1/1. It functions in the pathway porphyrin-containing compound metabolism; siroheme biosynthesis; siroheme from sirohydrochlorin: step 1/1. Its pathway is porphyrin-containing compound metabolism; siroheme biosynthesis; sirohydrochlorin from precorrin-2: step 1/1. Its function is as follows. Multifunctional enzyme that catalyzes the SAM-dependent methylations of uroporphyrinogen III at position C-2 and C-7 to form precorrin-2 via precorrin-1. Then it catalyzes the NAD-dependent ring dehydrogenation of precorrin-2 to yield sirohydrochlorin. Finally, it catalyzes the ferrochelation of sirohydrochlorin to yield siroheme. In Yersinia pestis (strain Pestoides F), this protein is Siroheme synthase 1.